A 215-amino-acid chain; its full sequence is Phosphatidylserine decarboxylase proenzyme (215 aa).

Serine 184 serves as the catalytic Schiff-base intermediate with substrate; via pyruvic acid. A Pyruvic acid (Ser); by autocatalysis modification is found at serine 184.

This sequence belongs to the phosphatidylserine decarboxylase family. PSD-A subfamily. In terms of assembly, heterodimer of a large membrane-associated beta subunit and a small pyruvoyl-containing alpha subunit. It depends on pyruvate as a cofactor. Post-translationally, is synthesized initially as an inactive proenzyme. Formation of the active enzyme involves a self-maturation process in which the active site pyruvoyl group is generated from an internal serine residue via an autocatalytic post-translational modification. Two non-identical subunits are generated from the proenzyme in this reaction, and the pyruvate is formed at the N-terminus of the alpha chain, which is derived from the carboxyl end of the proenzyme. The post-translation cleavage follows an unusual pathway, termed non-hydrolytic serinolysis, in which the side chain hydroxyl group of the serine supplies its oxygen atom to form the C-terminus of the beta chain, while the remainder of the serine residue undergoes an oxidative deamination to produce ammonia and the pyruvoyl prosthetic group on the alpha chain.

Its subcellular location is the cell membrane. It catalyses the reaction a 1,2-diacyl-sn-glycero-3-phospho-L-serine + H(+) = a 1,2-diacyl-sn-glycero-3-phosphoethanolamine + CO2. The protein operates within phospholipid metabolism; phosphatidylethanolamine biosynthesis; phosphatidylethanolamine from CDP-diacylglycerol: step 2/2. Its function is as follows. Catalyzes the formation of phosphatidylethanolamine (PtdEtn) from phosphatidylserine (PtdSer). This chain is Phosphatidylserine decarboxylase proenzyme, found in Ralstonia pickettii (strain 12J).